A 264-amino-acid polypeptide reads, in one-letter code: Thymidylate synthase (264 aa).

DUMP is bound at residue Arg21. His51 is a binding site for (6R)-5,10-methylene-5,6,7,8-tetrahydrofolate. DUMP is bound at residue 126 to 127 (RR). Cys146 (nucleophile) is an active-site residue. Residues 166-169 (RSAD), Asn177, and 207-209 (HLY) each bind dUMP. Asp169 serves as a coordination point for (6R)-5,10-methylene-5,6,7,8-tetrahydrofolate. (6R)-5,10-methylene-5,6,7,8-tetrahydrofolate is bound at residue Ala263.

This sequence belongs to the thymidylate synthase family. Bacterial-type ThyA subfamily. In terms of assembly, homodimer.

Its subcellular location is the cytoplasm. The catalysed reaction is dUMP + (6R)-5,10-methylene-5,6,7,8-tetrahydrofolate = 7,8-dihydrofolate + dTMP. Its pathway is pyrimidine metabolism; dTTP biosynthesis. Its function is as follows. Catalyzes the reductive methylation of 2'-deoxyuridine-5'-monophosphate (dUMP) to 2'-deoxythymidine-5'-monophosphate (dTMP) while utilizing 5,10-methylenetetrahydrofolate (mTHF) as the methyl donor and reductant in the reaction, yielding dihydrofolate (DHF) as a by-product. This enzymatic reaction provides an intracellular de novo source of dTMP, an essential precursor for DNA biosynthesis. In Ralstonia nicotianae (strain ATCC BAA-1114 / GMI1000) (Ralstonia solanacearum), this protein is Thymidylate synthase.